A 132-amino-acid chain; its full sequence is Small ribosomal subunit protein uS8 (132 aa).

The protein belongs to the universal ribosomal protein uS8 family. As to quaternary structure, part of the 30S ribosomal subunit. Contacts proteins S5 and S12.

Functionally, one of the primary rRNA binding proteins, it binds directly to 16S rRNA central domain where it helps coordinate assembly of the platform of the 30S subunit. The protein is Small ribosomal subunit protein uS8 of Rhizobium rhizogenes (strain K84 / ATCC BAA-868) (Agrobacterium radiobacter).